We begin with the raw amino-acid sequence, 362 residues long: NAD(P)H-quinone oxidoreductase subunit 1, chloroplastic (362 aa).

8 consecutive transmembrane segments (helical) span residues 27–47 (IWILPILALLLGITIEVLVIV), 103–123 (IAVISILLSFLVIPLGYHFVL), 128–148 (IGVFLWIAISSIAPIGLLMAG), 164–184 (AAQSISYEIPLTFCVLAISLL), 202–222 (FFGWNLWRQPIGFLVFLISSL), 247–267 (YSGIKYGLFYLVSYLNLLVSS), 303–323 (VIGIFITLTKAYLFLFISITI), and 342–362 (FLLPISLGNLLLTTSFQLVSL).

It belongs to the complex I subunit 1 family. NDH is composed of at least 16 different subunits, 5 of which are encoded in the nucleus.

It localises to the plastid. It is found in the chloroplast thylakoid membrane. It carries out the reaction a plastoquinone + NADH + (n+1) H(+)(in) = a plastoquinol + NAD(+) + n H(+)(out). The enzyme catalyses a plastoquinone + NADPH + (n+1) H(+)(in) = a plastoquinol + NADP(+) + n H(+)(out). NDH shuttles electrons from NAD(P)H:plastoquinone, via FMN and iron-sulfur (Fe-S) centers, to quinones in the photosynthetic chain and possibly in a chloroplast respiratory chain. The immediate electron acceptor for the enzyme in this species is believed to be plastoquinone. Couples the redox reaction to proton translocation, and thus conserves the redox energy in a proton gradient. The protein is NAD(P)H-quinone oxidoreductase subunit 1, chloroplastic of Saccharum hybrid (Sugarcane).